The sequence spans 316 residues: IDS-like terpene synthase 2 (316 aa).

2 residues coordinate Mg(2+): Asp-69 and Asp-73.

It belongs to the FPP/GGPP synthase family. Mg(2+) serves as cofactor.

The enzyme catalyses (2E)-geranyl diphosphate + H2O = linalool + diphosphate. It carries out the reaction (2E,6E)-farnesyl diphosphate + H2O = (6E)-nerolidol + diphosphate. Its function is as follows. Terpene synthase that shows monoterpene synthase activity and produces linalool, using geranyl diphosphate (GPP) as substrate. Also shows sesquiterpene synthase activity as it is able to convert farnesyl diphosphate (FPP) into (E)-nerolidol. This chain is IDS-like terpene synthase 2, found in Melampsora larici-populina (strain 98AG31 / pathotype 3-4-7) (Poplar leaf rust fungus).